The sequence spans 180 residues: WPP domain-containing protein 2 (180 aa).

The segment covering 1–26 (MAETAETINTTISSPPPESESSTTIS) has biased composition (low complexity). 2 disordered regions span residues 1-61 (MAET…LRIW) and 140-180 (SVKA…KSEA). Residues 27 to 36 (AMTDPTSQEA) show a composition bias toward polar residues. Basic and acidic residues predominate over residues 37 to 53 (ASKDTDLTKEAESEKKP). A WPP region spans residues 44 to 147 (TKEAESEKKP…LESVKARSNA (104 aa)). Residue S173 is modified to Phosphoserine.

Binds to FPP proteins. Interacts with WAP, WIP1, WIP2 and WIP3 through its WPP domain. Interacts with WIT1 and HSP70-1. Expressed in roots, stems, leaves and flowers.

It localises to the nucleus envelope. The protein resides in the cytoplasm. It is found in the nucleus. Its subcellular location is the golgi apparatus. Regulates the mitotic activity in roots. Plays a role with HSP70-1 in facilitating WIT1 nuclear envelope targeting. This Arabidopsis thaliana (Mouse-ear cress) protein is WPP domain-containing protein 2 (WPP2).